The chain runs to 519 residues: MDKFRRNGKEDTFRQRRFLYPLLFQENLYAIAYDHYLSRSSSFESMENSSYNDRFSFLTVKRLISRIRQQNGSIVSFGNYNQNKNKLVGHNRNFYSELVLEGLTVVLEVTFSIQSKHYLEGMNEWNSFRSIHSIFPFMEDKIPHSNFLLDIRIPHSTHPEILVRTFRYWIQDAPSLHSLRSVLHEHRNLILSENLDQLILIASKEKTRLSLFLWNYYVYECESLLVPLWKRFSYSRSLSYGAFLERTTFYRKIEHIVIFSHKSIKDLKKRIWFLKDPSIHYVKDRERFLIALRGTYLLVKKWRYHLTNFWQCHFHLRSQPYRISIDELSKNCFSFLGYLFSVQMKTFVVKIKMLDDSFITDPITKEFDPIAPTTLLIGYLAKERFCDISGRPTGRLAWTGLTDDNILHRFDRIWRNILHYYSGSSKKDGLYRMKYILRLPCAKTLACKHKSAIRVVRERFGSELFTKSSPKERELISLSFSKTRSQRERIWHSDILQRNPFCNSWRNKQNLQVETPFDR.

This sequence belongs to the intron maturase 2 family. MatK subfamily.

It is found in the plastid. Its subcellular location is the chloroplast. Usually encoded in the trnK tRNA gene intron. Probably assists in splicing its own and other chloroplast group II introns. This Cycas panzhihuaensis (Dukou cycad) protein is Maturase K.